A 145-amino-acid polypeptide reads, in one-letter code: Ribonuclease HI (145 aa).

Positions 1-142 constitute an RNase H type-1 domain; sequence MNQTVYLYTD…ADDLANRGAA (142 aa). Positions 10, 48, 70, and 134 each coordinate Mg(2+).

It belongs to the RNase H family. As to quaternary structure, monomer. Requires Mg(2+) as cofactor.

The protein resides in the cytoplasm. The enzyme catalyses Endonucleolytic cleavage to 5'-phosphomonoester.. In terms of biological role, endonuclease that specifically degrades the RNA of RNA-DNA hybrids. The protein is Ribonuclease HI of Neisseria meningitidis serogroup A / serotype 4A (strain DSM 15465 / Z2491).